Consider the following 234-residue polypeptide: uncharacterized protein (234 aa).

The next 4 helical transmembrane spans lie at 22-42 (TFLN…IPLI), 59-79 (INWA…AYLI), 154-174 (FWIF…IFFC), and 186-206 (LLSL…IFAL).

It localises to the cell membrane. This is an uncharacterized protein from Escherichia coli (strain K12).